Consider the following 166-residue polypeptide: Gem-associated protein 6 (166 aa).

The region spanning 4 to 73 is the Sm domain; the sequence is WMKKSPLEWE…VQTVETISEG (70 aa). The region spanning 68 to 166 is the AD domain; that stretch reads ETISEGDHRV…LIQGHLSASQ (99 aa). Phosphoserine is present on residues Ser-94 and Ser-165.

In terms of assembly, part of the core SMN complex that contains SMN1, GEMIN2/SIP1, DDX20/GEMIN3, GEMIN4, GEMIN5, GEMIN6, GEMIN7, GEMIN8 and STRAP/UNRIP. Part of the SMN-Sm complex that contains SMN1, GEMIN2/SIP1, DDX20/GEMIN3, GEMIN4, GEMIN5, GEMIN6, GEMIN7, GEMIN8, STRAP/UNRIP and the Sm proteins SNRPB, SNRPD1, SNRPD2, SNRPD3, SNRPE, SNRPF and SNRPG. Interacts with GEMIN7; the interaction is direct. Interacts with GEMIN8; the interaction is direct. Interacts with SNRPB, SNRPD2, SNRPD3 and SNRPE; the interaction is direct.

The protein resides in the nucleus. Its subcellular location is the nucleoplasm. The protein localises to the gem. It is found in the cytoplasm. The SMN complex catalyzes the assembly of small nuclear ribonucleoproteins (snRNPs), the building blocks of the spliceosome, and thereby plays an important role in the splicing of cellular pre-mRNAs. Most spliceosomal snRNPs contain a common set of Sm proteins SNRPB, SNRPD1, SNRPD2, SNRPD3, SNRPE, SNRPF and SNRPG that assemble in a heptameric protein ring on the Sm site of the small nuclear RNA to form the core snRNP (Sm core). In the cytosol, the Sm proteins SNRPD1, SNRPD2, SNRPE, SNRPF and SNRPG are trapped in an inactive 6S pICln-Sm complex by the chaperone CLNS1A that controls the assembly of the core snRNP. To assemble core snRNPs, the SMN complex accepts the trapped 5Sm proteins from CLNS1A forming an intermediate. Binding of snRNA inside 5Sm triggers eviction of the SMN complex, thereby allowing binding of SNRPD3 and SNRPB to complete assembly of the core snRNP. The sequence is that of Gem-associated protein 6 (Gemin6) from Mus musculus (Mouse).